The following is a 163-amino-acid chain: Cell division protein SepF (163 aa).

The segment at 25–53 (SVAPHSGEERESAFSRRSAERAERTERPT) is disordered. A compositionally biased stretch (basic and acidic residues) spans 30-51 (SGEERESAFSRRSAERAERTER).

The protein belongs to the SepF family. In terms of assembly, homodimer. Interacts with FtsZ.

Its subcellular location is the cytoplasm. In terms of biological role, cell division protein that is part of the divisome complex and is recruited early to the Z-ring. Probably stimulates Z-ring formation, perhaps through the cross-linking of FtsZ protofilaments. Its function overlaps with FtsA. The polypeptide is Cell division protein SepF (Heliobacterium modesticaldum (strain ATCC 51547 / Ice1)).